We begin with the raw amino-acid sequence, 123 residues long: Sirohydrochlorin cobaltochelatase (123 aa).

Residue His-9 is the Proton acceptor of the active site. His-9 is a Co(2+) binding site. Residues Glu-43 and 68–73 (FAAGMH) contribute to the substrate site. His-73 provides a ligand contact to Co(2+).

This sequence belongs to the CbiX family. CbiXS subfamily. In terms of assembly, homotetramer; dimer of dimers.

The catalysed reaction is Co-sirohydrochlorin + 2 H(+) = sirohydrochlorin + Co(2+). It participates in cofactor biosynthesis; adenosylcobalamin biosynthesis; cob(II)yrinate a,c-diamide from sirohydrochlorin (anaerobic route): step 1/10. Catalyzes the insertion of Co(2+) into sirohydrochlorin as part of the anaerobic pathway to cobalamin biosynthesis. The chain is Sirohydrochlorin cobaltochelatase from Sulfolobus acidocaldarius (strain ATCC 33909 / DSM 639 / JCM 8929 / NBRC 15157 / NCIMB 11770).